Here is a 487-residue protein sequence, read N- to C-terminus: Phenylalanine--tRNA ligase alpha subunit (487 aa).

Residues Thr319, 361-363, and Tyr401 contribute to the L-phenylalanine site; that span reads QVE. Residue Glu403 participates in Mg(2+) binding. L-phenylalanine is bound at residue Phe427.

Belongs to the class-II aminoacyl-tRNA synthetase family. Phe-tRNA synthetase alpha subunit type 2 subfamily. As to quaternary structure, tetramer of two alpha and two beta subunits. It depends on Mg(2+) as a cofactor.

The protein localises to the cytoplasm. The enzyme catalyses tRNA(Phe) + L-phenylalanine + ATP = L-phenylalanyl-tRNA(Phe) + AMP + diphosphate + H(+). The polypeptide is Phenylalanine--tRNA ligase alpha subunit (phesA) (Dictyostelium discoideum (Social amoeba)).